The primary structure comprises 663 residues: Probable peptidyl-glycine alpha-amidating monooxygenase pamn-1 (663 aa).

The first 21 residues, 1–21, serve as a signal peptide directing secretion; it reads MNDRISINLIYLVLTFCCVSA. The peptidylglycine alpha-hydroxylating monooxygenase stretch occupies residues 1–300; that stretch reads MNDRISINLI…YDAKLDNPYP (300 aa). Cu(2+) contacts are provided by H75 and H76. Cysteines 82 and 98 form a disulfide. H142 is a binding site for Cu(2+). An N-linked (GlcNAc...) asparagine glycan is attached at N191. Intrachain disulfides connect C194/C305 and C261/C283. 2 residues coordinate Cu(2+): H210 and H212. Residue N269 is glycosylated (N-linked (GlcNAc...) asparagine). M282 is a binding site for Cu(2+). The peptidyl-alpha-hydroxyglycine alpha-amidating lyase stretch occupies residues 301–663; sequence QGAICAKDYP…WQFKIRHDQN (363 aa). R376 is an a protein binding site. Residue N411 is glycosylated (N-linked (GlcNAc...) asparagine). 4 NHL repeats span residues 411-454, 464-507, 511-554, and 626-656; these read NQTK…WKIE, SGEL…LDLN, IRQF…MTTQ, and FGQP…LWQF. An intrachain disulfide couples C478 to C497. A protein-binding residues include Y496 and R543.

In the C-terminal section; belongs to the peptidyl-alpha-hydroxyglycine alpha-amidating lyase family. It in the N-terminal section; belongs to the copper type II ascorbate-dependent monooxygenase family. In terms of assembly, monomer. The cofactor is Zn(2+). Cu(2+) serves as cofactor.

It localises to the secreted. It catalyses the reaction a [peptide]-C-terminal glycine + 2 L-ascorbate + O2 = a [peptide]-C-terminal (2S)-2-hydroxyglycine + 2 monodehydro-L-ascorbate radical + H2O. It carries out the reaction a [peptide]-C-terminal (2S)-2-hydroxyglycine = a [peptide]-C-terminal amide + glyoxylate. Functionally, probable bifunctional enzyme that catalyzes 2 sequential steps in C-terminal alpha-amidation of peptides. The monooxygenase part produces an unstable peptidyl(2-hydroxyglycine) intermediate that is dismutated to glyoxylate and the corresponding desglycine peptide amide by the lyase part. C-terminal amidation of peptides such as neuropeptides is essential for full biological activity. The chain is Probable peptidyl-glycine alpha-amidating monooxygenase pamn-1 from Caenorhabditis elegans.